We begin with the raw amino-acid sequence, 384 residues long: Carbamoyl phosphate synthase small chain (384 aa).

Residues 1–189 are CPSase; it reads MSKSALLVLE…GLPEAKDDSE (189 aa). 3 residues coordinate L-glutamine: S47, G241, and G243. The 188-residue stretch at 193–380 folds into the Glutamine amidotransferase type-1 domain; that stretch reads HVVAYDFGAK…IELIKLSVNE (188 aa). Residue C269 is the Nucleophile of the active site. L-glutamine is bound by residues L270, Q273, N311, G313, and F314. Residues H353 and E355 contribute to the active site.

This sequence belongs to the CarA family. Composed of two chains; the small (or glutamine) chain promotes the hydrolysis of glutamine to ammonia, which is used by the large (or ammonia) chain to synthesize carbamoyl phosphate. Tetramer of heterodimers (alpha,beta)4.

It catalyses the reaction hydrogencarbonate + L-glutamine + 2 ATP + H2O = carbamoyl phosphate + L-glutamate + 2 ADP + phosphate + 2 H(+). The catalysed reaction is L-glutamine + H2O = L-glutamate + NH4(+). Its pathway is amino-acid biosynthesis; L-arginine biosynthesis; carbamoyl phosphate from bicarbonate: step 1/1. The protein operates within pyrimidine metabolism; UMP biosynthesis via de novo pathway; (S)-dihydroorotate from bicarbonate: step 1/3. In terms of biological role, small subunit of the glutamine-dependent carbamoyl phosphate synthetase (CPSase). CPSase catalyzes the formation of carbamoyl phosphate from the ammonia moiety of glutamine, carbonate, and phosphate donated by ATP, constituting the first step of 2 biosynthetic pathways, one leading to arginine and/or urea and the other to pyrimidine nucleotides. The small subunit (glutamine amidotransferase) binds and cleaves glutamine to supply the large subunit with the substrate ammonia. The protein is Carbamoyl phosphate synthase small chain of Photobacterium profundum (strain SS9).